A 279-amino-acid chain; its full sequence is Movement protein (279 aa).

Belongs to the cucumovirus movement protein family.

Its subcellular location is the host cell junction. The protein resides in the host plasmodesma. Its function is as follows. Transports viral genome to neighboring plant cells directly through plasmosdesmata, without any budding. The movement protein allows efficient cell to cell propagation, by bypassing the host cell wall barrier. Acts by forming a tubular structure at the host plasmodesmata, enlarging it enough to allow free passage of virion capsids. This is Movement protein from Cucumis sativus (Cucumber).